Consider the following 898-residue polypeptide: Phosphoenolpyruvate carboxylase (898 aa).

Active-site residues include His-138 and Lys-561.

This sequence belongs to the PEPCase type 1 family. Requires Mg(2+) as cofactor.

It catalyses the reaction oxaloacetate + phosphate = phosphoenolpyruvate + hydrogencarbonate. Functionally, forms oxaloacetate, a four-carbon dicarboxylic acid source for the tricarboxylic acid cycle. The chain is Phosphoenolpyruvate carboxylase from Streptococcus suis (strain 98HAH33).